A 574-amino-acid polypeptide reads, in one-letter code: Proline--tRNA ligase (574 aa).

Belongs to the class-II aminoacyl-tRNA synthetase family. ProS type 1 subfamily. As to quaternary structure, homodimer.

The protein resides in the cytoplasm. It catalyses the reaction tRNA(Pro) + L-proline + ATP = L-prolyl-tRNA(Pro) + AMP + diphosphate. In terms of biological role, catalyzes the attachment of proline to tRNA(Pro) in a two-step reaction: proline is first activated by ATP to form Pro-AMP and then transferred to the acceptor end of tRNA(Pro). As ProRS can inadvertently accommodate and process non-cognate amino acids such as alanine and cysteine, to avoid such errors it has two additional distinct editing activities against alanine. One activity is designated as 'pretransfer' editing and involves the tRNA(Pro)-independent hydrolysis of activated Ala-AMP. The other activity is designated 'posttransfer' editing and involves deacylation of mischarged Ala-tRNA(Pro). The misacylated Cys-tRNA(Pro) is not edited by ProRS. The sequence is that of Proline--tRNA ligase from Teredinibacter turnerae (strain ATCC 39867 / T7901).